A 478-amino-acid polypeptide reads, in one-letter code: Cytochrome c-552 (478 aa).

The signal sequence occupies residues 1 to 26; that stretch reads MARKTLRARRFFSLIFPFFFITSVYA. Residue His94 participates in heme c binding. 3 residues coordinate heme: Cys122, Cys125, and Lys126. 6 residues coordinate heme c: Cys160, Cys163, His164, Cys209, Cys212, and His213. Ca(2+) is bound by residues Glu215, Tyr216, Lys261, and Gln263. Tyr216 contributes to the substrate binding site. His264 lines the substrate pocket. The heme c site is built by His275, Cys282, Cys285, His286, His301, Cys314, Cys317, His318, and His393.

Belongs to the cytochrome c-552 family. It depends on Ca(2+) as a cofactor. Heme c is required as a cofactor.

The protein resides in the periplasm. The enzyme catalyses 6 Fe(III)-[cytochrome c] + NH4(+) + 2 H2O = 6 Fe(II)-[cytochrome c] + nitrite + 8 H(+). It participates in nitrogen metabolism; nitrate reduction (assimilation). In terms of biological role, catalyzes the reduction of nitrite to ammonia, consuming six electrons in the process. This Salmonella paratyphi A (strain ATCC 9150 / SARB42) protein is Cytochrome c-552.